The following is a 102-amino-acid chain: Protamine-2 (102 aa).

2 disordered regions span residues methionine 1–histidine 40 and histidine 67–histidine 102. Residues serine 8, serine 10, and serine 37 each carry the phosphoserine modification.

It belongs to the protamine P2 family. Interacts with TDRP. In terms of processing, proteolytic processing into mature chains is required for histone eviction during spermatogenesis. Transition proteins (TNP1 and TNP2) are required for processing. In terms of tissue distribution, testis.

It localises to the nucleus. It is found in the chromosome. Functionally, protamines substitute for histones in the chromatin of sperm during the haploid phase of spermatogenesis. They compact sperm DNA into a highly condensed, stable and inactive complex. In Pan troglodytes (Chimpanzee), this protein is Protamine-2 (PRM2).